The chain runs to 255 residues: Ribosomal RNA small subunit methyltransferase A (255 aa).

The S-adenosyl-L-methionine site is built by asparagine 12, leucine 14, glycine 39, glutamate 60, aspartate 84, and asparagine 106.

The protein belongs to the class I-like SAM-binding methyltransferase superfamily. rRNA adenine N(6)-methyltransferase family. RsmA subfamily.

The protein resides in the cytoplasm. It carries out the reaction adenosine(1518)/adenosine(1519) in 16S rRNA + 4 S-adenosyl-L-methionine = N(6)-dimethyladenosine(1518)/N(6)-dimethyladenosine(1519) in 16S rRNA + 4 S-adenosyl-L-homocysteine + 4 H(+). Functionally, specifically dimethylates two adjacent adenosines (A1518 and A1519) in the loop of a conserved hairpin near the 3'-end of 16S rRNA in the 30S particle. May play a critical role in biogenesis of 30S subunits. The protein is Ribosomal RNA small subunit methyltransferase A of Janthinobacterium sp. (strain Marseille) (Minibacterium massiliensis).